A 426-amino-acid polypeptide reads, in one-letter code: Glutamate-1-semialdehyde 2,1-aminomutase (426 aa).

Lysine 265 is modified (N6-(pyridoxal phosphate)lysine).

The protein belongs to the class-III pyridoxal-phosphate-dependent aminotransferase family. HemL subfamily. As to quaternary structure, homodimer. Pyridoxal 5'-phosphate is required as a cofactor.

It localises to the cytoplasm. The catalysed reaction is (S)-4-amino-5-oxopentanoate = 5-aminolevulinate. Its pathway is porphyrin-containing compound metabolism; protoporphyrin-IX biosynthesis; 5-aminolevulinate from L-glutamyl-tRNA(Glu): step 2/2. In Shigella flexneri serotype 5b (strain 8401), this protein is Glutamate-1-semialdehyde 2,1-aminomutase.